Here is a 61-residue protein sequence, read N- to C-terminus: Metallothionein-1A (61 aa).

M1 carries the post-translational modification N-acetylmethionine. A beta region spans residues 1–29 (MDPNCSCPTGGSCSCAGSCTCKACRCPSC). A divalent metal cation is bound by residues C5, C7, C13, C15, C19, C21, C24, C26, C29, C33, C34, C36, C37, C41, C44, C48, C50, and C57. Residues 30-61 (KKSCCSCCPVGCAKCAQGCVCKGASDKCSCCA) form an alpha region. S58 carries the post-translational modification Phosphoserine. A divalent metal cation contacts are provided by C59 and C60.

Belongs to the metallothionein superfamily. Type 1 family. As to quaternary structure, monomer.

Its function is as follows. Metallothioneins have a high content of cysteine residues that bind various heavy metals; these proteins are transcriptionally regulated by both heavy metals and glucocorticoids. This Bos taurus (Bovine) protein is Metallothionein-1A (MT1A).